A 228-amino-acid chain; its full sequence is Endonuclease V (228 aa).

Mg(2+) is bound by residues Asp-36 and Asp-104.

Belongs to the endonuclease V family. Mg(2+) serves as cofactor.

Its subcellular location is the cytoplasm. It carries out the reaction Endonucleolytic cleavage at apurinic or apyrimidinic sites to products with a 5'-phosphate.. Its function is as follows. DNA repair enzyme involved in the repair of deaminated bases. Selectively cleaves double-stranded DNA at the second phosphodiester bond 3' to a deoxyinosine leaving behind the intact lesion on the nicked DNA. This Serratia proteamaculans (strain 568) protein is Endonuclease V.